A 1583-amino-acid chain; its full sequence is Methyl-CpG-binding domain protein 5/6 homolog sba (1583 aa).

The segment at 81-115 (AVHQQQQQHHHQQQQQQQHQQQQQILPAGLVNGNG) is disordered. Positions 83-104 (HQQQQQHHHQQQQQQQHQQQQQ) are enriched in low complexity. An MBD domain is found at 238 to 308 (RKTATSYNGN…YLFDFNAQVP (71 aa)). Disordered regions lie at residues 427–457 (NKLP…PTSQ), 556–579 (EPIV…QQQL), 630–694 (VTLV…QTQV), 839–862 (AELH…AASS), 940–980 (PPAQ…ISPQ), 1179–1247 (VMSR…RSIC), and 1287–1339 (QESP…SFPL). The span at 430 to 439 (PATNRTATTP) shows a compositional bias: low complexity. A compositionally biased stretch (pro residues) spans 440 to 449 (TPAPTPPPQH). Over residues 563 to 579 (QQQQQQQQQQLQQQQQL) the composition is skewed to low complexity. The segment covering 658–677 (AISTSHESPRQSLSSPTDSV) has biased composition (polar residues). Composition is skewed to low complexity over residues 679–693 (SAKS…PQTQ) and 851–862 (VSQPSPVAAASS). Polar residues-rich tracts occupy residues 1179–1195 (VMSR…TTTC), 1216–1240 (CVSS…PSST), and 1287–1313 (QESP…TVRT). Residues 1323-1333 (RGAARAAPSAS) show a composition bias toward low complexity. The PWWP domain maps to 1346–1408 (IGELIWGPAR…VNSLQSLSEG (63 aa)). Positions 1415–1446 (AQKDTRKSRKLNSQLERAIQEAMTELDNISAS) form a coiled coil. The disordered stretch occupies residues 1471-1497 (IGGQQQYQQQQQQQQQQQSPSSTNNKI). Residues 1474–1488 (QQQYQQQQQQQQQQQ) show a composition bias toward low complexity.

In terms of assembly, component of the polycomb repressive deubiquitinase (PR-DUB) complex, at least composed of caly/calypso, Asx and sba (MDB5/6 homolog). Interacts (via MBD domain) with Asx (via PHD domain); the interaction is important for the stability of the PR-DUB complex.

Functionally, non-catalytic component of the polycomb repressive deubiquitinase (PR-DUB) complex, a complex that specifically mediates deubiquitination of histone H2A monoubiquitinated at 'Lys-119' (H2AK118ub1). Important for maintaining stability of the PR-DUB complex. Probable epigenetic regulator involved in developmental pattern formation and eye development. The sequence is that of Methyl-CpG-binding domain protein 5/6 homolog sba from Drosophila melanogaster (Fruit fly).